The sequence spans 543 residues: Acrosin-binding protein (543 aa).

An N-terminal signal peptide occupies residues 1–25; sequence MRKPAAGFLPSLLKVLLLPLAPAAA. The segment at 26–106 is pro-ACR binding; that stretch reads QDSTQASTPG…ASWFESFCQF (81 aa). Residues 26–273 constitute a propeptide, removed in mature form; it reads QDSTQASTPG…NPSSFAPRVR (248 aa). The disordered stretch occupies residues 185–272; sequence SLGGQEQAPE…SNPSSFAPRV (88 aa). Residues 192-220 are compositionally biased toward basic and acidic residues; the sequence is APEHKQEQGVEHRQEPTQEHKQEEGQKQE. The span at 221–231 shows a compositional bias: acidic residues; it reads EQEEEQEEEGK. The span at 232 to 243 shows a compositional bias: basic and acidic residues; the sequence is QEEGQGTKEGRE. The interval 319–427 is pro-ACR binding; that stretch reads LPHTEALLVL…NQVGSPESGR (109 aa).

In terms of assembly, binds proacrosin (pro-ACR). Does not bind the mature form of ACR. Post-translationally, phosphorylated on Tyr residues in capacitated sperm. The N-terminus is blocked. In terms of processing, synthesized as a 60-kDa precursor, the 32-kDa mature form is post-translationally produced by the removal of the N-terminal half of the precursor during sperm maturation in the testis and/or epididymis. In terms of tissue distribution, expression restricted to testis in normal tissue. Expressed in a wide spectrum of cancers, including bladder, breast, liver, lung and colon cancers.

It is found in the secreted. It localises to the cytoplasmic vesicle. The protein localises to the secretory vesicle. The protein resides in the acrosome. Acrosomal protein that maintains proacrosin (pro-ACR) as an enzymatically inactive zymogen in the acrosome. Involved also in the acrosome formation. The chain is Acrosin-binding protein from Homo sapiens (Human).